Here is a 201-residue protein sequence, read N- to C-terminus: Probable nicotinate-nucleotide adenylyltransferase (201 aa).

The protein belongs to the NadD family.

It carries out the reaction nicotinate beta-D-ribonucleotide + ATP + H(+) = deamido-NAD(+) + diphosphate. It functions in the pathway cofactor biosynthesis; NAD(+) biosynthesis; deamido-NAD(+) from nicotinate D-ribonucleotide: step 1/1. Its function is as follows. Catalyzes the reversible adenylation of nicotinate mononucleotide (NaMN) to nicotinic acid adenine dinucleotide (NaAD). The chain is Probable nicotinate-nucleotide adenylyltransferase from Clostridium botulinum (strain ATCC 19397 / Type A).